Reading from the N-terminus, the 312-residue chain is Ribosomal RNA small subunit methyltransferase H (312 aa).

S-adenosyl-L-methionine is bound by residues G34–H36, D54, L83, D99, and Q106.

Belongs to the methyltransferase superfamily. RsmH family.

The protein resides in the cytoplasm. It catalyses the reaction cytidine(1402) in 16S rRNA + S-adenosyl-L-methionine = N(4)-methylcytidine(1402) in 16S rRNA + S-adenosyl-L-homocysteine + H(+). Its function is as follows. Specifically methylates the N4 position of cytidine in position 1402 (C1402) of 16S rRNA. This Rubrobacter xylanophilus (strain DSM 9941 / JCM 11954 / NBRC 16129 / PRD-1) protein is Ribosomal RNA small subunit methyltransferase H.